The primary structure comprises 622 residues: Probable potassium transport system protein Kup (622 aa).

The next 12 helical transmembrane spans lie at 8–28, 50–70, 100–120, 137–157, 169–189, 203–223, 247–267, 285–305, 337–357, 366–386, 392–412, and 419–439; these read LAAL…TSVL, VLSV…VVLV, GWLL…GVIT, PHFG…LFAV, FGPV…PHIV, ALGF…AVVL, WFSV…ALLL, ALVP…QALI, IYLP…VVMF, AYGI…FFVI, YPLA…LAFF, and LLQG…LMMT.

This sequence belongs to the HAK/KUP transporter (TC 2.A.72) family.

The protein localises to the cell inner membrane. It catalyses the reaction K(+)(in) + H(+)(in) = K(+)(out) + H(+)(out). Functionally, transport of potassium into the cell. Likely operates as a K(+):H(+) symporter. The chain is Probable potassium transport system protein Kup from Acidovorax ebreus (strain TPSY) (Diaphorobacter sp. (strain TPSY)).